Consider the following 513-residue polypeptide: Na(+)/H(+) antiporter NhaB (513 aa).

Helical transmembrane passes span 23 to 43 (LALIIFLIVNPLIFLISPFVA), 52 to 72 (IFTLAMALKCYPLLPGGLLAI), 97 to 117 (LLLMFMVAGIYFMKQLLLFIF), 120 to 140 (LLLSIRSKMLLSLSFCVAAAF), 144 to 164 (FLDALTVVAVVISVAVGFYGI), 202 to 222 (LMMHAGVGTALGGVMTMVGEP), 238 to 258 (FFLRMSPVTVPVLICGLLTCL), 303 to 323 (AIIGVWLVTALALHLAEVGLI), 348 to 368 (TESLPFTALLTVFFSVVAVII), 391 to 411 (LFYIFNGLLSSISDNVFVGTI), 447 to 467 (ATPNGQAAFLFLLTSALAPLI), and 475 to 495 (VWMALPYTLVLTLVGLLCVEF).

This sequence belongs to the NhaB Na(+)/H(+) (TC 2.A.34) antiporter family.

The protein localises to the cell inner membrane. The catalysed reaction is 2 Na(+)(in) + 3 H(+)(out) = 2 Na(+)(out) + 3 H(+)(in). Na(+)/H(+) antiporter that extrudes sodium in exchange for external protons. The protein is Na(+)/H(+) antiporter NhaB of Shigella sonnei (strain Ss046).